A 122-amino-acid polypeptide reads, in one-letter code: Large ribosomal subunit protein uL14c (122 aa).

It belongs to the universal ribosomal protein uL14 family. In terms of assembly, part of the 50S ribosomal subunit.

Its subcellular location is the plastid. It localises to the chloroplast. Binds to 23S rRNA. This is Large ribosomal subunit protein uL14c from Angiopteris evecta (Mule's foot fern).